The chain runs to 670 residues: Pescadillo homolog (670 aa).

A coiled-coil region spans residues 292 to 321 (GANQAQAKVKEAESKRSLMEEELLKVRELF). Residues 316-402 (KVRELFRGLT…QMLPVTGYRI (87 aa)) form the BRCT domain. A disordered region spans residues 643-670 (RQRAEAKGKKLKEKKADNPYKKLPKWVQ). Residues 644 to 662 (QRAEAKGKKLKEKKADNPY) are compositionally biased toward basic and acidic residues.

It belongs to the pescadillo family.

The protein localises to the nucleus. It localises to the nucleolus. It is found in the nucleoplasm. Its function is as follows. Required for maturation of ribosomal RNAs and formation of the large ribosomal subunit. The polypeptide is Pescadillo homolog (Leishmania braziliensis).